The primary structure comprises 473 residues: Anthocyanidin-3-O-glucoside rhamnosyltransferase (473 aa).

The protein belongs to the UDP-glycosyltransferase family. As to expression, expressed in petals, styles and anthers.

The protein operates within pigment biosynthesis; anthocyanin biosynthesis. In terms of biological role, controls the rhamnosylation of reddish anthocyanidin-3-O-glucosides, which is the first step in a series of modifications that finally yield magenta or blue/purple coloured anthocyanins. Controls the conversion of anthocyanidin-3-O-glucosides to anthocyanidin-3-O-rutinosides. In Petunia hybrida (Petunia), this protein is Anthocyanidin-3-O-glucoside rhamnosyltransferase.